The chain runs to 238 residues: N-terminal acetyltransferase A complex catalytic subunit ARD1 (238 aa).

One can recognise an N-acetyltransferase domain in the interval 35–195 (YHILSWPEAS…DAYAMKKVLK (161 aa)).

This sequence belongs to the acetyltransferase family. ARD1 subfamily. In terms of assembly, component of the N-terminal acetyltransferase A (NatA) complex, which is composed of ARD1, NAT1 and NAT5. Can self-associate.

The protein localises to the cytoplasm. The catalysed reaction is N-terminal glycyl-[protein] + acetyl-CoA = N-terminal N(alpha)-acetylglycyl-[protein] + CoA + H(+). The enzyme catalyses N-terminal L-alanyl-[protein] + acetyl-CoA = N-terminal N(alpha)-acetyl-L-alanyl-[protein] + CoA + H(+). It carries out the reaction N-terminal L-seryl-[protein] + acetyl-CoA = N-terminal N(alpha)-acetyl-L-seryl-[protein] + CoA + H(+). It catalyses the reaction N-terminal L-valyl-[protein] + acetyl-CoA = N-terminal N(alpha)-acetyl-L-valyl-[protein] + CoA + H(+). The catalysed reaction is N-terminal L-cysteinyl-[protein] + acetyl-CoA = N-terminal N(alpha)-acetyl-L-cysteinyl-[protein] + CoA + H(+). The enzyme catalyses N-terminal L-threonyl-[protein] + acetyl-CoA = N-terminal N(alpha)-acetyl-L-threonyl-[protein] + CoA + H(+). Functionally, catalytic component of the NatA N-terminal acetyltransferase, which catalyzes acetylation of proteins beginning with Met-Ser, Met-Gly and Met-Ala. N-acetylation plays a role in normal eukaryotic translation and processing, protect against proteolytic degradation and protein turnover. This Saccharomyces cerevisiae (strain ATCC 204508 / S288c) (Baker's yeast) protein is N-terminal acetyltransferase A complex catalytic subunit ARD1 (ARD1).